The chain runs to 202 residues: Imidazole glycerol phosphate synthase subunit HisH (202 aa).

Positions 3-202 (RIVIIDYGLG…KILKNFVEMC (200 aa)) constitute a Glutamine amidotransferase type-1 domain. The Nucleophile role is filled by Cys-79. Active-site residues include His-183 and Glu-185.

Heterodimer of HisH and HisF.

The protein localises to the cytoplasm. It carries out the reaction 5-[(5-phospho-1-deoxy-D-ribulos-1-ylimino)methylamino]-1-(5-phospho-beta-D-ribosyl)imidazole-4-carboxamide + L-glutamine = D-erythro-1-(imidazol-4-yl)glycerol 3-phosphate + 5-amino-1-(5-phospho-beta-D-ribosyl)imidazole-4-carboxamide + L-glutamate + H(+). The catalysed reaction is L-glutamine + H2O = L-glutamate + NH4(+). The protein operates within amino-acid biosynthesis; L-histidine biosynthesis; L-histidine from 5-phospho-alpha-D-ribose 1-diphosphate: step 5/9. In terms of biological role, IGPS catalyzes the conversion of PRFAR and glutamine to IGP, AICAR and glutamate. The HisH subunit catalyzes the hydrolysis of glutamine to glutamate and ammonia as part of the synthesis of IGP and AICAR. The resulting ammonia molecule is channeled to the active site of HisF. In Methanosarcina acetivorans (strain ATCC 35395 / DSM 2834 / JCM 12185 / C2A), this protein is Imidazole glycerol phosphate synthase subunit HisH.